The chain runs to 50 residues: uncharacterized protein (50 aa).

This is an uncharacterized protein from Sulfolobus islandicus filamentous virus (isolate Iceland/Hveragerdi) (SIFV).